The sequence spans 343 residues: Fc receptor-like protein 1 (343 aa).

The signal sequence occupies residues 1–16 (MLPWLLLLICALPCEP). Ig-like C2-type domains lie at 17 to 109 (AGIS…VSIH) and 117 to 200 (PVLT…EVVA). At 17 to 219 (AGISDVSLKT…PTENGISHLS (203 aa)) the chain is on the extracellular side. The N-linked (GlcNAc...) asparagine glycan is linked to Asn51. Cys138 and Cys185 are disulfide-bonded. Asn202 is a glycosylation site (N-linked (GlcNAc...) asparagine). A helical membrane pass occupies residues 220–240 (LGLTGWLLGCLSPITMALIFC). Residues 241–343 (YWLKRKIGRQ…IAHMDYEDAM (103 aa)) are Cytoplasmic-facing. A disordered region spans residues 251–278 (SEDPVRSPPQTVLQGSTYPKSPDSRQPE). The segment covering 258 to 269 (PPQTVLQGSTYP) has biased composition (polar residues). 3 short sequence motifs (ITIM motif) span residues 266-271 (STYPKS), 279-284 (PLYENV), and 291-296 (EVYSLV). Tyr281 is subject to Phosphotyrosine. The residue at position 297 (Tyr297) is a Phosphotyrosine. Short sequence motifs (ITIM motif) lie at residues 325–330 (GLYSKP) and 337–342 (MDYEDA).

In terms of assembly, interacts with ABL1. Interacts with GRB2 and SOS1. Interacts with SHIP-1/INPP5D. Post-translationally, phosphorylated on C-terminal region upon BCR ligation leading to recruitment of ABL1. Widely expressed. Expressed in B-cells at the various stages of differentiation.

The protein localises to the cell membrane. In terms of biological role, may function as an activating coreceptor in B-cells. May function in B-cells activation and differentiation. In Mus musculus (Mouse), this protein is Fc receptor-like protein 1 (Fcrl1).